A 1131-amino-acid polypeptide reads, in one-letter code: Translation initiation factor IF-2 (1131 aa).

The disordered stretch occupies residues 49–542 (KFKGSVSSNE…AFIMPKPQQS (494 aa)). Residues 60-75 (KSIDNGKASRVEKPEK) are compositionally biased toward basic and acidic residues. 2 stretches are compositionally biased toward polar residues: residues 76–88 (NNSVTAKADQTPS) and 108–125 (SEQNVTTGSTESEDNIQS). A compositionally biased stretch (basic and acidic residues) spans 127-138 (GDRKYQHTDRRP). Residues 139–152 (QGNNGEGPQTSTNS) are compositionally biased toward polar residues. Composition is skewed to basic and acidic residues over residues 164-180 (GDRRPQGQNSGDRRPYN) and 223-239 (GDRRPQGQNSGDRRPYN). Over residues 411 to 436 (GQGGYGGRPQGQGSYGGRPQGQGGYA) the composition is skewed to gly residues. 2 stretches are compositionally biased toward basic and acidic residues: residues 450-479 (KDFDKDKDSGYTRSFDKKRTDPKSGEKSSI) and 487-530 (LTKE…DPNR). The tr-type G domain maps to 632 to 801 (KRPPVVCVMG…ILTAEMGELK (170 aa)). The segment at 641-648 (GHVDHGKT) is G1. Residue 641 to 648 (GHVDHGKT) coordinates GTP. Residues 666–670 (GITQH) form a G2 region. A G3 region spans residues 687 to 690 (DTPG). GTP contacts are provided by residues 687-691 (DTPGH) and 741-744 (NKID). Positions 741–744 (NKID) are G4. The tract at residues 777-779 (SAH) is G5.

The protein belongs to the TRAFAC class translation factor GTPase superfamily. Classic translation factor GTPase family. IF-2 subfamily.

The protein resides in the cytoplasm. Its function is as follows. One of the essential components for the initiation of protein synthesis. Protects formylmethionyl-tRNA from spontaneous hydrolysis and promotes its binding to the 30S ribosomal subunits. Also involved in the hydrolysis of GTP during the formation of the 70S ribosomal complex. The protein is Translation initiation factor IF-2 of Lachnoclostridium phytofermentans (strain ATCC 700394 / DSM 18823 / ISDg) (Clostridium phytofermentans).